Consider the following 2126-residue polypeptide: Polycystin family receptor for egg jelly (2126 aa).

The first 18 residues, 1–18 (MWPGPALLLLGLGLGLGS), serve as a signal peptide directing secretion. The Extracellular segment spans residues 19–1068 (QPPPTGPRGL…AIISNLTQNP (1050 aa)). Positions 20 to 71 (PPPTGPRGLPGVLRGAPGLGQGAESSVRGGDTGGLSPRAAPRHASPTPPRRC) are disordered. Residues asparagine 84, asparagine 94, asparagine 129, asparagine 192, asparagine 243, asparagine 325, asparagine 571, asparagine 761, asparagine 774, asparagine 807, asparagine 849, asparagine 888, asparagine 960, and asparagine 1063 are each glycosylated (N-linked (GlcNAc...) asparagine). The REJ domain maps to 102-797 (CIMQPVKINR…SMMFCEFADD (696 aa)). A helical transmembrane segment spans residues 1069–1089 (ATFLAVLFIMILYAILAFWAL). The Cytoplasmic segment spans residues 1090–1273 (HRDVIDLYFR…VPKPFNRLQR (184 aa)). Residues 1114-1231 (LCYLVTIFTG…TLDATFSVTN (118 aa)) form the PLAT domain. Residues 1274-1294 (LSCCLAMLLSSLVCNIMFFNL) traverse the membrane as a helical segment. The Extracellular segment spans residues 1295–1311 (NQKEKIESRHMHIIRSM). Residues 1312–1332 (LIGIESVVITIPVQLLITFFF) form a helical membrane-spanning segment. Residues 1333–1449 (TYSQKNLKMN…KTQIILPRWC (117 aa)) are Cytoplasmic-facing. Residues 1379-1431 (RAAVSTSAPEEKEAFETSQKHEKADTQMSNKNSSNNNQEASEGVPPKAFSSQP) form a disordered region. Residues 1387–1403 (PEEKEAFETSQKHEKAD) are compositionally biased toward basic and acidic residues. A helical membrane pass occupies residues 1450–1470 (VYIAWFLVFATSGISSFFIVF). Residues 1471-1483 (YGVTYGYAKSIEW) lie on the Extracellular side of the membrane. Residues 1484–1504 (LFASFCSFCQSVFLVQPCNIL) form a helical membrane-spanning segment. Topologically, residues 1505-1580 (LRSGTRSYKP…RRENRIRRRS (76 aa)) are cytoplasmic. Residues 1581-1601 (FLFLSYLVTHFIFLTLLLLLI) traverse the membrane as a helical segment. Residues 1602–1838 (FSLRHNDSFY…DFNRKTSSEI (237 aa)) lie on the Extracellular side of the membrane. Residues asparagine 1607, asparagine 1676, asparagine 1766, and asparagine 1817 are each glycosylated (N-linked (GlcNAc...) asparagine). The helical transmembrane segment at 1839-1859 (YLYAAILIFFCAYVVDEGYII) threads the bilayer. Residues 1860–1875 (RQERASYIRSVYNLLN) lie on the Cytoplasmic side of the membrane. Residues 1876 to 1896 (FSLKCMFALLIVLFFWKYFLA) form a helical membrane-spanning segment. Topologically, residues 1897–1918 (TKMVQLYLADPEAFIPFHAVSR) are extracellular. The chain crosses the membrane as a helical span at residues 1919–1939 (VDHFMRIILAFLLFLTILKTL). Over 1940–1964 (RYSRFFYNVRLAQKAIQAALPGICH) the chain is Cytoplasmic. The helical transmembrane segment at 1965–1985 (TALVVSIYSFMYVAFGYLVFG) threads the bilayer. Topologically, residues 1986 to 2019 (QHEWNYSNMIHATQTIFSYCVSAFQNTEFSGNKV) are extracellular. Residues 2020–2040 (LGVLFLSSFMLVMICIFINLF) form a helical membrane-spanning segment. Residues 2041–2126 (QAVILSAYDE…NGKKMIYLVV (86 aa)) lie on the Cytoplasmic side of the membrane.

The protein belongs to the polycystin family. Exclusively expressed in testis.

Its subcellular location is the cell membrane. The protein resides in the cytoplasmic vesicle. It is found in the secretory vesicle. It localises to the acrosome membrane. The protein localises to the nucleus. In terms of biological role, testis-specific protein that controls sperm transport and the timing of zona pellucida-evoked exocytosis of the sperm acrosome. In Mus musculus (Mouse), this protein is Polycystin family receptor for egg jelly (Pkdrej).